A 238-amino-acid chain; its full sequence is Probable xyloglucan-specific endo-beta-1,4-glucanase A (238 aa).

The N-terminal stretch at 1 to 18 (MKLSLSVALSLAASTAQA) is a signal peptide. Residues Asn-106 and Asn-171 are each glycosylated (N-linked (GlcNAc...) asparagine).

This sequence belongs to the glycosyl hydrolase 12 (cellulase H) family.

It localises to the secreted. It catalyses the reaction xyloglucan + H2O = xyloglucan oligosaccharides.. Catalyzes endohydrolysis of 1,4-beta-D-glucosidic linkages in xyloglucan with retention of the beta-configuration of the glycosyl residues. Specific for xyloglucan and does not hydrolyze other cell wall components. This Aspergillus fumigatus (strain ATCC MYA-4609 / CBS 101355 / FGSC A1100 / Af293) (Neosartorya fumigata) protein is Probable xyloglucan-specific endo-beta-1,4-glucanase A (xgeA).